The chain runs to 159 residues: SsrA-binding protein (159 aa).

The protein belongs to the SmpB family.

The protein resides in the cytoplasm. Its function is as follows. Required for rescue of stalled ribosomes mediated by trans-translation. Binds to transfer-messenger RNA (tmRNA), required for stable association of tmRNA with ribosomes. tmRNA and SmpB together mimic tRNA shape, replacing the anticodon stem-loop with SmpB. tmRNA is encoded by the ssrA gene; the 2 termini fold to resemble tRNA(Ala) and it encodes a 'tag peptide', a short internal open reading frame. During trans-translation Ala-aminoacylated tmRNA acts like a tRNA, entering the A-site of stalled ribosomes, displacing the stalled mRNA. The ribosome then switches to translate the ORF on the tmRNA; the nascent peptide is terminated with the 'tag peptide' encoded by the tmRNA and targeted for degradation. The ribosome is freed to recommence translation, which seems to be the essential function of trans-translation. This Idiomarina loihiensis (strain ATCC BAA-735 / DSM 15497 / L2-TR) protein is SsrA-binding protein.